Here is a 251-residue protein sequence, read N- to C-terminus: tRNA (guanine-N(1)-)-methyltransferase (251 aa).

Residues glycine 117 and 137 to 142 (IGDYVL) contribute to the S-adenosyl-L-methionine site.

This sequence belongs to the RNA methyltransferase TrmD family. Homodimer.

It is found in the cytoplasm. The catalysed reaction is guanosine(37) in tRNA + S-adenosyl-L-methionine = N(1)-methylguanosine(37) in tRNA + S-adenosyl-L-homocysteine + H(+). Specifically methylates guanosine-37 in various tRNAs. In Actinobacillus pleuropneumoniae serotype 5b (strain L20), this protein is tRNA (guanine-N(1)-)-methyltransferase.